A 290-amino-acid polypeptide reads, in one-letter code: 4-hydroxy-tetrahydrodipicolinate synthase (290 aa).

Threonine 44 serves as a coordination point for pyruvate. Tyrosine 132 (proton donor/acceptor) is an active-site residue. Lysine 160 serves as the catalytic Schiff-base intermediate with substrate. Pyruvate is bound at residue isoleucine 202.

Belongs to the DapA family. As to quaternary structure, homotetramer; dimer of dimers.

The protein resides in the cytoplasm. The enzyme catalyses L-aspartate 4-semialdehyde + pyruvate = (2S,4S)-4-hydroxy-2,3,4,5-tetrahydrodipicolinate + H2O + H(+). It participates in amino-acid biosynthesis; L-lysine biosynthesis via DAP pathway; (S)-tetrahydrodipicolinate from L-aspartate: step 3/4. Its function is as follows. Catalyzes the condensation of (S)-aspartate-beta-semialdehyde [(S)-ASA] and pyruvate to 4-hydroxy-tetrahydrodipicolinate (HTPA). The protein is 4-hydroxy-tetrahydrodipicolinate synthase of Ruegeria pomeroyi (strain ATCC 700808 / DSM 15171 / DSS-3) (Silicibacter pomeroyi).